The sequence spans 206 residues: Probable N-acetyltransferase 14 (206 aa).

The 152-residue stretch at leucine 55–leucine 206 folds into the N-acetyltransferase domain. Residues phenylalanine 57–methionine 77 traverse the membrane as a helical segment.

It belongs to the camello family.

The protein localises to the membrane. In terms of biological role, probable acetyltransferase. Its function is as follows. May act as a transcription factor regulating the expression of coproporphyrinogen oxidase by binding to a promoter regulatory element. This is Probable N-acetyltransferase 14 from Bos taurus (Bovine).